We begin with the raw amino-acid sequence, 135 residues long: D-ribose pyranase (135 aa).

The active-site Proton donor is the His20. Residues Asp28, His102, and 124 to 126 (YSN) each bind substrate.

It belongs to the RbsD / FucU family. RbsD subfamily. Homodecamer.

It localises to the cytoplasm. It carries out the reaction beta-D-ribopyranose = beta-D-ribofuranose. Its pathway is carbohydrate metabolism; D-ribose degradation; D-ribose 5-phosphate from beta-D-ribopyranose: step 1/2. Catalyzes the interconversion of beta-pyran and beta-furan forms of D-ribose. This is D-ribose pyranase from Thermotoga maritima (strain ATCC 43589 / DSM 3109 / JCM 10099 / NBRC 100826 / MSB8).